A 601-amino-acid chain; its full sequence is A-type ATP synthase subunit A (601 aa).

235 to 242 (GGFGTGKT) contributes to the ATP binding site.

It belongs to the ATPase alpha/beta chains family. As to quaternary structure, has multiple subunits with at least A(3), B(3), C, D, E, F, H, I and proteolipid K(x).

It localises to the cell membrane. The enzyme catalyses ATP + H2O + 4 H(+)(in) = ADP + phosphate + 5 H(+)(out). Functionally, component of the A-type ATP synthase that produces ATP from ADP in the presence of a proton gradient across the membrane. The A chain is the catalytic subunit. This Thermofilum pendens (strain DSM 2475 / Hrk 5) protein is A-type ATP synthase subunit A.